The primary structure comprises 856 residues: Phosphoenolpyruvate synthase (856 aa).

The active-site Tele-phosphohistidine intermediate is H433. R523, R636, E738, G759, S760, N761, and D762 together coordinate substrate. E738 is a Mg(2+) binding site. D762 serves as a coordination point for Mg(2+). C809 acts as the Proton donor in catalysis.

Belongs to the PEP-utilizing enzyme family. The cofactor is Mg(2+).

The enzyme catalyses pyruvate + ATP + H2O = phosphoenolpyruvate + AMP + phosphate + 2 H(+). It functions in the pathway carbohydrate biosynthesis; gluconeogenesis. In terms of biological role, catalyzes the phosphorylation of pyruvate to phosphoenolpyruvate. The chain is Phosphoenolpyruvate synthase (ppsA) from Aquifex aeolicus (strain VF5).